We begin with the raw amino-acid sequence, 197 residues long: dTTP/UTP pyrophosphatase (197 aa).

Asp-70 acts as the Proton acceptor in catalysis.

This sequence belongs to the Maf family. YhdE subfamily. A divalent metal cation is required as a cofactor.

It localises to the cytoplasm. The enzyme catalyses dTTP + H2O = dTMP + diphosphate + H(+). It catalyses the reaction UTP + H2O = UMP + diphosphate + H(+). In terms of biological role, nucleoside triphosphate pyrophosphatase that hydrolyzes dTTP and UTP. May have a dual role in cell division arrest and in preventing the incorporation of modified nucleotides into cellular nucleic acids. The polypeptide is dTTP/UTP pyrophosphatase (yceF) (Shigella dysenteriae serotype 1 (strain Sd197)).